A 490-amino-acid polypeptide reads, in one-letter code: Bifunctional protein HldE (490 aa).

The ribokinase stretch occupies residues methionine 1–alanine 330. Position 205–208 (asparagine 205–glutamate 208) interacts with ATP. The active site involves aspartate 275. Residues phenylalanine 358 to alanine 490 are cytidylyltransferase.

The protein in the N-terminal section; belongs to the carbohydrate kinase PfkB family. It in the C-terminal section; belongs to the cytidylyltransferase family. As to quaternary structure, homodimer.

It carries out the reaction D-glycero-beta-D-manno-heptose 7-phosphate + ATP = D-glycero-beta-D-manno-heptose 1,7-bisphosphate + ADP + H(+). It catalyses the reaction D-glycero-beta-D-manno-heptose 1-phosphate + ATP + H(+) = ADP-D-glycero-beta-D-manno-heptose + diphosphate. The protein operates within nucleotide-sugar biosynthesis; ADP-L-glycero-beta-D-manno-heptose biosynthesis; ADP-L-glycero-beta-D-manno-heptose from D-glycero-beta-D-manno-heptose 7-phosphate: step 1/4. Its pathway is nucleotide-sugar biosynthesis; ADP-L-glycero-beta-D-manno-heptose biosynthesis; ADP-L-glycero-beta-D-manno-heptose from D-glycero-beta-D-manno-heptose 7-phosphate: step 3/4. In terms of biological role, catalyzes the phosphorylation of D-glycero-D-manno-heptose 7-phosphate at the C-1 position to selectively form D-glycero-beta-D-manno-heptose-1,7-bisphosphate. Functionally, catalyzes the ADP transfer from ATP to D-glycero-beta-D-manno-heptose 1-phosphate, yielding ADP-D-glycero-beta-D-manno-heptose. The sequence is that of Bifunctional protein HldE from Rhodopseudomonas palustris (strain BisB18).